The following is a 259-amino-acid chain: GTP cyclohydrolase FolE2 (259 aa).

This sequence belongs to the GTP cyclohydrolase IV family.

The catalysed reaction is GTP + H2O = 7,8-dihydroneopterin 3'-triphosphate + formate + H(+). Its pathway is cofactor biosynthesis; 7,8-dihydroneopterin triphosphate biosynthesis; 7,8-dihydroneopterin triphosphate from GTP: step 1/1. In terms of biological role, converts GTP to 7,8-dihydroneopterin triphosphate. This Thermotoga neapolitana (strain ATCC 49049 / DSM 4359 / NBRC 107923 / NS-E) protein is GTP cyclohydrolase FolE2.